The sequence spans 94 residues: CRISPR-associated endoribonuclease Cas2 1 (94 aa).

Residue D8 coordinates Mg(2+).

It belongs to the CRISPR-associated endoribonuclease Cas2 protein family. Homodimer, forms a heterotetramer with a Cas1 homodimer. The cofactor is Mg(2+).

CRISPR (clustered regularly interspaced short palindromic repeat), is an adaptive immune system that provides protection against mobile genetic elements (viruses, transposable elements and conjugative plasmids). CRISPR clusters contain sequences complementary to antecedent mobile elements and target invading nucleic acids. CRISPR clusters are transcribed and processed into CRISPR RNA (crRNA). Involved in the integration of spacer DNA into the CRISPR cassette. Functions as a ssRNA-specific endoribonuclease. This is CRISPR-associated endoribonuclease Cas2 1 (cas21) from Archaeoglobus fulgidus (strain ATCC 49558 / DSM 4304 / JCM 9628 / NBRC 100126 / VC-16).